The following is a 78-amino-acid chain: MSDIEQRVKQAVAEQLGIKAEEIKNEASFMDDLGADSLDLVELVMSFENDFDITIPDEDSNEITTVQSAIDYVTKKLG.

Residues 2-77 (SDIEQRVKQA…SAIDYVTKKL (76 aa)) form the Carrier domain. The residue at position 37 (Ser-37) is an O-(pantetheine 4'-phosphoryl)serine.

It belongs to the acyl carrier protein (ACP) family. Post-translationally, 4'-phosphopantetheine is transferred from CoA to a specific serine of apo-ACP by AcpS. This modification is essential for activity because fatty acids are bound in thioester linkage to the sulfhydryl of the prosthetic group.

It localises to the cytoplasm. The protein operates within lipid metabolism; fatty acid biosynthesis. Its function is as follows. Carrier of the growing fatty acid chain in fatty acid biosynthesis. The polypeptide is Acyl carrier protein (Acinetobacter baylyi (strain ATCC 33305 / BD413 / ADP1)).